The primary structure comprises 181 residues: ATP-dependent protease subunit ClpQ (181 aa).

The active site involves Ser2. Gly165, Cys168, and Thr171 together coordinate Na(+).

This sequence belongs to the peptidase T1B family. HslV subfamily. As to quaternary structure, a double ring-shaped homohexamer of ClpQ is capped on each side by a ring-shaped ClpY homohexamer. The assembly of the ClpQ/ClpY complex is dependent on binding of ATP.

The protein resides in the cytoplasm. Functionally, protease subunit of a proteasome-like degradation complex. This chain is ATP-dependent protease subunit ClpQ (clpQ), found in Bacillus licheniformis (strain ATCC 14580 / DSM 13 / JCM 2505 / CCUG 7422 / NBRC 12200 / NCIMB 9375 / NCTC 10341 / NRRL NRS-1264 / Gibson 46).